The sequence spans 230 residues: Octanoyltransferase (230 aa).

In terms of domain architecture, BPL/LPL catalytic spans 38 to 215; it reads AGGADTLLLL…AVCAALDGVL (178 aa). Substrate-binding positions include 76–83, 145–147, and 158–160; these read RGGKITWH, AIG, and GFA. The active-site Acyl-thioester intermediate is the Cys-176.

The protein belongs to the LipB family.

The protein localises to the cytoplasm. It catalyses the reaction octanoyl-[ACP] + L-lysyl-[protein] = N(6)-octanoyl-L-lysyl-[protein] + holo-[ACP] + H(+). It participates in protein modification; protein lipoylation via endogenous pathway; protein N(6)-(lipoyl)lysine from octanoyl-[acyl-carrier-protein]: step 1/2. Functionally, catalyzes the transfer of endogenously produced octanoic acid from octanoyl-acyl-carrier-protein onto the lipoyl domains of lipoate-dependent enzymes. Lipoyl-ACP can also act as a substrate although octanoyl-ACP is likely to be the physiological substrate. This Mycobacterium bovis (strain BCG / Tokyo 172 / ATCC 35737 / TMC 1019) protein is Octanoyltransferase.